The sequence spans 575 residues: SH2B adapter protein 3 (575 aa).

Disordered regions lie at residues 1-23 (MNGPALQPSSPSSAPSASPAAAP), 83-136 (RAPG…CSFQ), and 150-176 (SAGELPAAHTAAAPGTPGEAAETPARP). The residue at position 13 (Ser13) is a Phosphoserine. The segment covering 83–93 (RAPGRDYRDTG) has biased composition (basic and acidic residues). Positions 95 to 104 (GPPAKAEASP) are enriched in low complexity. Phosphoserine is present on residues Ser103, Ser120, and Ser150. Low complexity predominate over residues 152–174 (GELPAAHTAAAPGTPGEAAETPA). Residues 194–307 (EALKEAVLRY…WMAELSECTG (114 aa)) enclose the PH domain. Residues 322 to 346 (ALEPSTSSSPRGSTDSLNQGASPGG) are disordered. A compositionally biased stretch (low complexity) spans 325-337 (PSTSSSPRGSTDS). Ser330 is subject to Phosphoserine. The region spanning 364 to 462 (WFHGPISRVK…ACDVRLSSYV (99 aa)) is the SH2 domain. 2 disordered regions span residues 503 to 525 (SSGCPRGLSPEGLPGRSSPPEQI) and 546 to 575 (PVNRARDSDYEMDSSSRSHLRAIDNQYTPL).

It belongs to the SH2B adapter family. In terms of assembly, binds to the tyrosine-phosphorylated TCR zeta chain via its SH2 domain. Tyrosine phosphorylated by LCK. As to expression, preferentially expressed by lymphoid cell lines.

In terms of biological role, links T-cell receptor activation signal to phospholipase C-gamma-1, GRB2 and phosphatidylinositol 3-kinase. The chain is SH2B adapter protein 3 (SH2B3) from Homo sapiens (Human).